The chain runs to 320 residues: MRQTKTGILLANLGTPDAPTPEAVKRYLKQFLSDRRVVDTSRLLWWPLLRGVILPLRSPRVAKLYASVWMEGGSPLMVYSRQQQQALAQRLPETPVALGMSYGSPSLESAVDELLAEHVDHIVVLPLYPQYSCSTVGAVWDELARILARKRSIPGISFIRDYADNHDYINALANSVRASFAKHGEPDLLLLSYHGIPQRYADEGDDYPQRCRTTTRELASALEMAPEKVMMTFQSRFGREPWLMPYTDETLKMLGEKGVGHIQVMCPGFAADCLETLEEIAEQNREVFLGAGGKKYEYIPALNATSEHIEMMANLVAAYR.

2 residues coordinate Fe cation: His-194 and Glu-275.

This sequence belongs to the ferrochelatase family. As to quaternary structure, monomer.

It is found in the cytoplasm. The catalysed reaction is heme b + 2 H(+) = protoporphyrin IX + Fe(2+). Its pathway is porphyrin-containing compound metabolism; protoheme biosynthesis; protoheme from protoporphyrin-IX: step 1/1. Catalyzes the ferrous insertion into protoporphyrin IX. This is Ferrochelatase from Escherichia coli O127:H6 (strain E2348/69 / EPEC).